A 342-amino-acid polypeptide reads, in one-letter code: tRNA N6-adenosine threonylcarbamoyltransferase (342 aa).

2 residues coordinate Fe cation: H114 and H118. Residues 136 to 140 (LVSGG), D169, G182, D186, and N275 each bind substrate. A Fe cation-binding site is contributed by D301.

It belongs to the KAE1 / TsaD family. It depends on Fe(2+) as a cofactor.

It is found in the cytoplasm. The enzyme catalyses L-threonylcarbamoyladenylate + adenosine(37) in tRNA = N(6)-L-threonylcarbamoyladenosine(37) in tRNA + AMP + H(+). Required for the formation of a threonylcarbamoyl group on adenosine at position 37 (t(6)A37) in tRNAs that read codons beginning with adenine. Is involved in the transfer of the threonylcarbamoyl moiety of threonylcarbamoyl-AMP (TC-AMP) to the N6 group of A37, together with TsaE and TsaB. TsaD likely plays a direct catalytic role in this reaction. This chain is tRNA N6-adenosine threonylcarbamoyltransferase, found in Streptococcus pyogenes serotype M18 (strain MGAS8232).